Consider the following 732-residue polypeptide: Wall-associated receptor kinase 2 (732 aa).

The signal sequence occupies residues methionine 1–glycine 23. The Extracellular portion of the chain corresponds to glutamine 24–tryptophan 329. Residues asparagine 57, asparagine 75, asparagine 111, asparagine 154, asparagine 217, and asparagine 246 are each glycosylated (N-linked (GlcNAc...) asparagine). The EGF-like 1 domain occupies glycine 230–glutamine 277. Disulfide bonds link cysteine 234-cysteine 249, cysteine 243-cysteine 260, cysteine 262-cysteine 276, cysteine 282-cysteine 295, cysteine 289-cysteine 304, and cysteine 306-cysteine 318. The EGF-like 2; calcium-binding domain occupies aspartate 278–threonine 319. Asparagine 288 carries an N-linked (GlcNAc...) asparagine glycan. A helical transmembrane segment spans residues threonine 330–leucine 350. Residues glutamine 351 to arginine 732 are Cytoplasmic-facing. Residue threonine 393 is modified to Phosphothreonine. Positions tyrosine 404 to leucine 677 constitute a Protein kinase domain. ATP contacts are provided by residues leucine 410–valine 418 and lysine 432. The residue at position 477 (tyrosine 477) is a Phosphotyrosine. The Proton acceptor role is filled by aspartate 529. Residues threonine 563 and threonine 568 each carry the phosphothreonine modification. Tyrosine 576 bears the Phosphotyrosine mark.

Belongs to the protein kinase superfamily. Ser/Thr protein kinase family. Predominantly expressed in green tissues such as stems and leaves. Detected at organ junctions.

The protein resides in the membrane. It carries out the reaction L-seryl-[protein] + ATP = O-phospho-L-seryl-[protein] + ADP + H(+). It catalyses the reaction L-threonyl-[protein] + ATP = O-phospho-L-threonyl-[protein] + ADP + H(+). In terms of biological role, serine/threonine-protein kinase that may function as a signaling receptor of extracellular matrix component. Binding to pectin may have significance in the control of cell expansion, morphogenesis and development. This chain is Wall-associated receptor kinase 2 (WAK2), found in Arabidopsis thaliana (Mouse-ear cress).